Reading from the N-terminus, the 353-residue chain is Alanine racemase (353 aa).

K33 serves as the catalytic Proton acceptor; specific for D-alanine. Residue K33 is modified to N6-(pyridoxal phosphate)lysine. R129 contacts substrate. Y250 acts as the Proton acceptor; specific for L-alanine in catalysis. M298 serves as a coordination point for substrate.

It belongs to the alanine racemase family. Pyridoxal 5'-phosphate serves as cofactor.

The enzyme catalyses L-alanine = D-alanine. The protein operates within amino-acid biosynthesis; D-alanine biosynthesis; D-alanine from L-alanine: step 1/1. Functionally, catalyzes the interconversion of L-alanine and D-alanine. May also act on other amino acids. The chain is Alanine racemase (alr) from Azoarcus sp. (strain BH72).